Consider the following 245-residue polypeptide: Small ribosomal subunit protein uS3 (245 aa).

Residues 39–108 form the KH type-2 domain; that stretch reads IRNYIKKNYY…SVFVNVQEVK (70 aa).

Belongs to the universal ribosomal protein uS3 family. Part of the 30S ribosomal subunit. Forms a tight complex with proteins S10 and S14.

In terms of biological role, binds the lower part of the 30S subunit head. Binds mRNA in the 70S ribosome, positioning it for translation. This is Small ribosomal subunit protein uS3 from Dictyoglomus turgidum (strain DSM 6724 / Z-1310).